Reading from the N-terminus, the 497-residue chain is METKLPPASTPTSPSSPGLSPVPPPDKVDGFSRRSLRRARPRRSHSSSQFRYQSNQQELTPLPLLKDVPASELHELLSRKLAQCGVMFDFLDCVADLKGKEVKRAALNELVECVGSTRGVLIEPVYPDIIRMISVNIFRTLPPSENPEFDPEEDEPNLEPSWPHLQLVYEFFLRFLESPDFQPSVAKRYVDQKFVLMLLELFDSEDPREREYLKTILHRVYGKFLGLRAYIRKQCNHIFLRFIYEFEHFNGVAELLEILGSIINGFALPLKTEHKQFLVRVLIPLHSVKSLSVFHAQLAYCVVQFLEKDATLTEHVIRGLLKYWPKTCTQKEVMFLGEMEEILDVIEPSQFVKIQEPLFKQVARCVSSPHFQVAERALYFWNNEYILSLIEDNCHTVLPAVFGTLYQVSKEHWNQTIVSLIYNVLKTFMEMNGKLFDELTASYKLEKQQEQQKAQERQELWQGLEELRLRRLQGTQGAKEAPLQRLTPQVAASGGQS.

Over residues 1–19 (METKLPPASTPTSPSSPGL) the composition is skewed to low complexity. Disordered stretches follow at residues 1 to 55 (METK…YQSN) and 475 to 497 (TQGAKEAPLQRLTPQVAASGGQS). Phosphoserine; by CLK2 occurs at positions 32, 35, 44, 46, 47, and 48. Residues 34–45 (RSLRRARPRRSH) show a composition bias toward basic residues.

It belongs to the phosphatase 2A regulatory subunit B56 family. Component of the serine/threonine-protein phosphatase 2A complex (PP2A). This complex consists of a common heterodimeric core enzyme, composed of a 36 kDa catalytic subunit (subunit C) and a 65 kDa constant scaffold subunit (PR65 or subunit A), that associates with a variety of regulatory subunits. Proteins that associate with the core dimer include three families of regulatory subunits B (the R2/B/PR55/B55, R3/B''/PR72/PR130/PR59 and R5/B'/B56 families), the 48 kDa variable regulatory subunit, viral proteins, and cell signaling molecules. Interacts with SGO1. Interacts with AKT1. Interacts with CUL3 and KLHL15; this interaction leads to proteasomal degradation. In terms of processing, ubiquitinated by E3 CUL3-KLHL15 complex; this modification leads to proteasomal degradation. In terms of tissue distribution, highest expression in brain.

It localises to the cytoplasm. In terms of biological role, as the regulatory component of the serine/threonine-protein phosphatase 2A (PP2A) holoenzyme, modulates substrate specificity, subcellular localization, and responsiveness to phosphorylation. The phosphorylated form mediates the interaction between PP2A and AKT1, leading to AKT1 dephosphorylation. The polypeptide is Serine/threonine-protein phosphatase 2A 56 kDa regulatory subunit beta isoform (PPP2R5B) (Homo sapiens (Human)).